A 131-amino-acid chain; its full sequence is Large ribosomal subunit protein bL19c (131 aa).

It belongs to the bacterial ribosomal protein bL19 family.

It is found in the plastid. The protein resides in the cyanelle. In terms of biological role, this protein is located at the 30S-50S ribosomal subunit interface and may play a role in the structure and function of the aminoacyl-tRNA binding site. This chain is Large ribosomal subunit protein bL19c (rpl19), found in Cyanophora paradoxa.